The sequence spans 123 residues: Small ribosomal subunit protein uS13 (123 aa).

A disordered region spans residues 92 to 123; the sequence is RKGLPVRGQKTKTNARTRKGPKKLVGAKKKSK.

This sequence belongs to the universal ribosomal protein uS13 family. As to quaternary structure, part of the 30S ribosomal subunit. Forms a loose heterodimer with protein S19. Forms two bridges to the 50S subunit in the 70S ribosome.

Located at the top of the head of the 30S subunit, it contacts several helices of the 16S rRNA. In the 70S ribosome it contacts the 23S rRNA (bridge B1a) and protein L5 of the 50S subunit (bridge B1b), connecting the 2 subunits; these bridges are implicated in subunit movement. Contacts the tRNAs in the A and P-sites. The sequence is that of Small ribosomal subunit protein uS13 from Clostridium kluyveri (strain NBRC 12016).